Here is a 67-residue protein sequence, read N- to C-terminus: ATP synthase F(0) complex subunit 8 (67 aa).

The helical transmembrane segment at 8–24 (TWFITIISSMITLFILF) threads the bilayer. K54 carries the N6-acetyllysine; alternate modification. K54 carries the post-translational modification N6-succinyllysine; alternate. Residue K57 is modified to N6-acetyllysine.

Belongs to the ATPase protein 8 family. In terms of assembly, component of the ATP synthase complex composed at least of ATP5F1A/subunit alpha, ATP5F1B/subunit beta, ATP5MC1/subunit c (homooctomer), MT-ATP6/subunit a, MT-ATP8/subunit 8, ATP5ME/subunit e, ATP5MF/subunit f, ATP5MG/subunit g, ATP5MK/subunit k, ATP5MJ/subunit j, ATP5F1C/subunit gamma, ATP5F1D/subunit delta, ATP5F1E/subunit epsilon, ATP5PF/subunit F6, ATP5PB/subunit b, ATP5PD/subunit d, ATP5PO/subunit OSCP. ATP synthase complex consists of a soluble F(1) head domain (subunits alpha(3) and beta(3)) - the catalytic core - and a membrane F(0) domain - the membrane proton channel (subunits c, a, 8, e, f, g, k and j). These two domains are linked by a central stalk (subunits gamma, delta, and epsilon) rotating inside the F1 region and a stationary peripheral stalk (subunits F6, b, d, and OSCP). Interacts with PRICKLE3.

It localises to the mitochondrion membrane. Functionally, subunit 8, of the mitochondrial membrane ATP synthase complex (F(1)F(0) ATP synthase or Complex V) that produces ATP from ADP in the presence of a proton gradient across the membrane which is generated by electron transport complexes of the respiratory chain. ATP synthase complex consist of a soluble F(1) head domain - the catalytic core - and a membrane F(1) domain - the membrane proton channel. These two domains are linked by a central stalk rotating inside the F(1) region and a stationary peripheral stalk. During catalysis, ATP synthesis in the catalytic domain of F(1) is coupled via a rotary mechanism of the central stalk subunits to proton translocation. In vivo, can only synthesize ATP although its ATP hydrolase activity can be activated artificially in vitro. Part of the complex F(0) domain. This chain is ATP synthase F(0) complex subunit 8, found in Mus musculus (Mouse).